Reading from the N-terminus, the 548-residue chain is Chaperonin GroEL (548 aa).

Residues 30–33 (TLGP), Lys-51, 87–91 (DGTTT), Gly-415, 479–481 (NAA), and Asp-495 each bind ATP.

This sequence belongs to the chaperonin (HSP60) family. Forms a cylinder of 14 subunits composed of two heptameric rings stacked back-to-back. Interacts with the co-chaperonin GroES.

It is found in the cytoplasm. The enzyme catalyses ATP + H2O + a folded polypeptide = ADP + phosphate + an unfolded polypeptide.. In terms of biological role, together with its co-chaperonin GroES, plays an essential role in assisting protein folding. The GroEL-GroES system forms a nano-cage that allows encapsulation of the non-native substrate proteins and provides a physical environment optimized to promote and accelerate protein folding. The chain is Chaperonin GroEL from Aliivibrio fischeri (strain MJ11) (Vibrio fischeri).